The chain runs to 37 residues: Large ribosomal subunit protein bL36 (37 aa).

It belongs to the bacterial ribosomal protein bL36 family.

This chain is Large ribosomal subunit protein bL36, found in Paracidovorax citrulli (strain AAC00-1) (Acidovorax citrulli).